We begin with the raw amino-acid sequence, 54 residues long: Large ribosomal subunit protein bL33B (54 aa).

It belongs to the bacterial ribosomal protein bL33 family.

This Saccharopolyspora erythraea (strain ATCC 11635 / DSM 40517 / JCM 4748 / NBRC 13426 / NCIMB 8594 / NRRL 2338) protein is Large ribosomal subunit protein bL33B.